The following is a 375-amino-acid chain: Ribosomal RNA large subunit methyltransferase G (375 aa).

It belongs to the methyltransferase superfamily. RlmG family.

Its subcellular location is the cytoplasm. The enzyme catalyses guanosine(1835) in 23S rRNA + S-adenosyl-L-methionine = N(2)-methylguanosine(1835) in 23S rRNA + S-adenosyl-L-homocysteine + H(+). Its function is as follows. Specifically methylates the guanine in position 1835 (m2G1835) of 23S rRNA. The chain is Ribosomal RNA large subunit methyltransferase G from Erwinia tasmaniensis (strain DSM 17950 / CFBP 7177 / CIP 109463 / NCPPB 4357 / Et1/99).